A 1062-amino-acid chain; its full sequence is Carbamoyl phosphate synthase pyrimidine-specific large chain (1062 aa).

The carboxyphosphate synthetic domain stretch occupies residues 1–401; it reads MGKREDIKKI…SLLKAVRSLE (401 aa). Positions 129, 169, 175, 176, 208, 210, 215, 241, 242, 243, 284, and 298 each coordinate ATP. One can recognise an ATP-grasp 1 domain in the interval 133 to 327; the sequence is RALMKELNEP…IAKIAAKIAV (195 aa). 3 residues coordinate Mg(2+): glutamine 284, glutamate 298, and asparagine 300. The Mn(2+) site is built by glutamine 284, glutamate 298, and asparagine 300. Residues 402–546 form an oligomerization domain region; that stretch reads AGVYHLDQPD…YGTYEEENES (145 aa). The tract at residues 547–929 is carbamoyl phosphate synthetic domain; it reads ERTDKKSILV…ALYKGLIASG (383 aa). The region spanning 671–861 is the ATP-grasp 2 domain; the sequence is EQTLVELNIP…MANVATKVML (191 aa). Residues arginine 707, arginine 746, leucine 748, glutamate 752, glycine 777, valine 778, histidine 779, serine 780, glutamine 820, and glutamate 832 each contribute to the ATP site. Glutamine 820, glutamate 832, and asparagine 834 together coordinate Mg(2+). Residues glutamine 820, glutamate 832, and asparagine 834 each contribute to the Mn(2+) site. Residues 930 to 1062 enclose the MGS-like domain; that stretch reads MSIPTHGSVL…FSAESMPVMQ (133 aa). The segment at 930-1062 is allosteric domain; sequence MSIPTHGSVL…FSAESMPVMQ (133 aa).

The protein belongs to the CarB family. Composed of two chains; the small (or glutamine) chain promotes the hydrolysis of glutamine to ammonia, which is used by the large (or ammonia) chain to synthesize carbamoyl phosphate. Tetramer of heterodimers (alpha,beta)4. It depends on Mg(2+) as a cofactor. Mn(2+) is required as a cofactor.

It carries out the reaction hydrogencarbonate + L-glutamine + 2 ATP + H2O = carbamoyl phosphate + L-glutamate + 2 ADP + phosphate + 2 H(+). The enzyme catalyses hydrogencarbonate + NH4(+) + 2 ATP = carbamoyl phosphate + 2 ADP + phosphate + 2 H(+). The protein operates within amino-acid biosynthesis; L-arginine biosynthesis; carbamoyl phosphate from bicarbonate: step 1/1. Its pathway is pyrimidine metabolism; UMP biosynthesis via de novo pathway; (S)-dihydroorotate from bicarbonate: step 1/3. Its function is as follows. Small subunit of the glutamine-dependent carbamoyl phosphate synthetase (CPSase). CPSase catalyzes the formation of carbamoyl phosphate from the ammonia moiety of glutamine, carbonate, and phosphate donated by ATP, constituting the first step of the biosynthetic pathway leading to pyrimidine nucleotides. The large subunit (synthetase) binds the substrates ammonia (free or transferred from glutamine from the small subunit), hydrogencarbonate and ATP and carries out an ATP-coupled ligase reaction, activating hydrogencarbonate by forming carboxy phosphate which reacts with ammonia to form carbamoyl phosphate. The polypeptide is Carbamoyl phosphate synthase pyrimidine-specific large chain (pyrAB) (Halalkalibacterium halodurans (strain ATCC BAA-125 / DSM 18197 / FERM 7344 / JCM 9153 / C-125) (Bacillus halodurans)).